A 552-amino-acid polypeptide reads, in one-letter code: Probable glucomannan 4-beta-mannosyltransferase 10 (552 aa).

A helical transmembrane segment spans residues 62–82 (IVPLFKCLVAFCLIISLLVFI). Aspartate 161 is a catalytic residue. Residues aspartate 220 and aspartate 222 each coordinate substrate. Residue aspartate 314 is part of the active site. Transmembrane regions (helical) follow at residues 393 to 413 (IIVHCFTFIFYCVILPTSVFF), 430 to 450 (ITLCIVIATPRSFYLVIFWIL), 509 to 529 (EIMVGIYILCCACYGLFFGNT), and 530 to 550 (LLYLYLFMQAVAFLISGVGFV).

Belongs to the glycosyltransferase 2 family. Plant cellulose synthase-like A subfamily.

Its subcellular location is the golgi apparatus membrane. The enzyme catalyses GDP-mannose + (glucomannan)n = GDP + (glucomannan)n+1.. Its function is as follows. Probable mannan synthase which consists of a 4-beta-mannosyltransferase activity on mannan using GDP-mannose. The beta-1,4-mannan product is the backbone for galactomannan synthesis by galactomannan galactosyltransferase. Galactomannan is a noncellulosic polysaccharides of plant cell wall. The chain is Probable glucomannan 4-beta-mannosyltransferase 10 from Arabidopsis thaliana (Mouse-ear cress).